The sequence spans 87 residues: Small ribosomal subunit protein bS18 (87 aa).

The protein belongs to the bacterial ribosomal protein bS18 family. As to quaternary structure, part of the 30S ribosomal subunit. Forms a tight heterodimer with protein bS6.

Binds as a heterodimer with protein bS6 to the central domain of the 16S rRNA, where it helps stabilize the platform of the 30S subunit. This chain is Small ribosomal subunit protein bS18, found in Campylobacter hominis (strain ATCC BAA-381 / DSM 21671 / CCUG 45161 / LMG 19568 / NCTC 13146 / CH001A).